Here is a 603-residue protein sequence, read N- to C-terminus: Geraniol synthase Tps-5031G8, chloroplastic (603 aa).

The N-terminal 35 residues, 1-35 (MCSISQKVVIGLNKAAANNCLQNLDRRGFKTRRVS), are a transit peptide targeting the chloroplast. 5 residues coordinate (2E)-geranyl diphosphate: R319, D356, D360, R497, and D500. D356 and D360 together coordinate Mg(2+). Residues 356–360 (DDVYD) carry the DDXXD motif motif. Residues D500, T504, and E508 each contribute to the Mg(2+) site.

Belongs to the terpene synthase family. Tpsb subfamily. Monomer. Mg(2+) serves as cofactor. It depends on Mn(2+) as a cofactor.

It is found in the plastid. The protein localises to the chloroplast. The enzyme catalyses (2E)-geranyl diphosphate + H2O = (2E)-geraniol + diphosphate. Its pathway is secondary metabolite biosynthesis; terpenoid biosynthesis. Functionally, monoterpene synthase (mono-TPS) involved in the biosynthesis of monoterpenes natural products. Catalyzes the conversion of (2E)-geranyl diphosphate (GPP) into geraniol. This chain is Geraniol synthase Tps-5031G8, chloroplastic, found in Perilla frutescens var. hirtella (Perilla citriodora).